Reading from the N-terminus, the 275-residue chain is Diaminopimelate epimerase (275 aa).

Substrate-binding residues include Asn-12, Gln-45, and Asn-65. Cys-74 serves as the catalytic Proton donor. Residues 75–76 (GN), Asn-158, Asn-191, and 209–210 (ER) each bind substrate. Cys-218 acts as the Proton acceptor in catalysis. 219–220 (GT) serves as a coordination point for substrate.

This sequence belongs to the diaminopimelate epimerase family. Homodimer.

The protein resides in the cytoplasm. The enzyme catalyses (2S,6S)-2,6-diaminopimelate = meso-2,6-diaminopimelate. The protein operates within amino-acid biosynthesis; L-lysine biosynthesis via DAP pathway; DL-2,6-diaminopimelate from LL-2,6-diaminopimelate: step 1/1. Catalyzes the stereoinversion of LL-2,6-diaminopimelate (L,L-DAP) to meso-diaminopimelate (meso-DAP), a precursor of L-lysine and an essential component of the bacterial peptidoglycan. This is Diaminopimelate epimerase from Shewanella sp. (strain MR-4).